Here is a 259-residue protein sequence, read N- to C-terminus: O-antigen export system permease protein RfbA (259 aa).

6 helical membrane-spanning segments follow: residues 33 to 53 (LGYL…YFIF), 73 to 95 (FPWQ…NAQI), 111 to 131 (VMME…FLFV), 142 to 162 (WGIP…SIIF), 176 to 196 (VSLG…SDMI), and 228 to 248 (EYIS…LSIF). An ABC transmembrane type-2 domain is found at 33-251 (LGYLWSVANP…VVGLSIFNKL (219 aa)).

Belongs to the ABC-2 integral membrane protein family.

The protein localises to the cell inner membrane. Its function is as follows. May form an ATP-driven O-antigen export apparatus, in association with RfbB. This is O-antigen export system permease protein RfbA (rfbA) from Klebsiella pneumoniae.